We begin with the raw amino-acid sequence, 333 residues long: GTP 3',8-cyclase (333 aa).

Residues 7-221 enclose the Radical SAM core domain; it reads KFGRVHDYIR…FEACNEAGYE (215 aa). Position 16 (R16) interacts with GTP. Residues C23 and C27 each contribute to the [4Fe-4S] cluster site. S-adenosyl-L-methionine is bound at residue Y29. Residue C30 coordinates [4Fe-4S] cluster. R66 provides a ligand contact to GTP. Residue G70 participates in S-adenosyl-L-methionine binding. T97 is a GTP binding site. Residue S121 coordinates S-adenosyl-L-methionine. K158 provides a ligand contact to GTP. M192 serves as a coordination point for S-adenosyl-L-methionine. [4Fe-4S] cluster contacts are provided by C257 and C260. Residue 262–264 coordinates GTP; sequence RLR. C274 serves as a coordination point for [4Fe-4S] cluster.

It belongs to the radical SAM superfamily. MoaA family. Monomer and homodimer. It depends on [4Fe-4S] cluster as a cofactor.

The catalysed reaction is GTP + AH2 + S-adenosyl-L-methionine = (8S)-3',8-cyclo-7,8-dihydroguanosine 5'-triphosphate + 5'-deoxyadenosine + L-methionine + A + H(+). It participates in cofactor biosynthesis; molybdopterin biosynthesis. Functionally, catalyzes the cyclization of GTP to (8S)-3',8-cyclo-7,8-dihydroguanosine 5'-triphosphate. This chain is GTP 3',8-cyclase, found in Listeria monocytogenes serovar 1/2a (strain ATCC BAA-679 / EGD-e).